The chain runs to 337 residues: B3 domain-containing protein REM16 (337 aa).

2 DNA-binding regions (TF-B3) span residues 22–116 (TLHF…FDGQ) and 223–321 (FLVF…FRGE).

It is found in the nucleus. This Arabidopsis thaliana (Mouse-ear cress) protein is B3 domain-containing protein REM16 (REM16).